The primary structure comprises 210 residues: Putative O-methyltransferase MSMEG_5073/MSMEI_4947 (210 aa).

S-adenosyl-L-methionine is bound by residues Val-37, Glu-59, 61–62 (GT), Ser-67, Asp-85, and Val-86. Position 133 (Asp-133) interacts with substrate. Asp-135 serves as a coordination point for S-adenosyl-L-methionine.

This sequence belongs to the class I-like SAM-binding methyltransferase superfamily. Cation-dependent O-methyltransferase family.

The polypeptide is Putative O-methyltransferase MSMEG_5073/MSMEI_4947 (Mycolicibacterium smegmatis (strain ATCC 700084 / mc(2)155) (Mycobacterium smegmatis)).